We begin with the raw amino-acid sequence, 241 residues long: Orotidine 5'-phosphate decarboxylase (241 aa).

Residues D19, K41, 69 to 78, T124, R185, Q194, G214, and R215 contribute to the substrate site; that span reads DLKFFDIPAT. K71 (proton donor) is an active-site residue.

This sequence belongs to the OMP decarboxylase family. Type 1 subfamily. As to quaternary structure, homodimer.

It catalyses the reaction orotidine 5'-phosphate + H(+) = UMP + CO2. Its pathway is pyrimidine metabolism; UMP biosynthesis via de novo pathway; UMP from orotate: step 2/2. In terms of biological role, catalyzes the decarboxylation of orotidine 5'-monophosphate (OMP) to uridine 5'-monophosphate (UMP). The sequence is that of Orotidine 5'-phosphate decarboxylase from Stenotrophomonas maltophilia (strain K279a).